Consider the following 215-residue polypeptide: uncharacterized protein (215 aa).

Residues 98-119 form a helical membrane-spanning segment; that stretch reads AAALAVAVASLCVCTLLLTHIV.

It localises to the membrane. This is an uncharacterized protein from Treponema pallidum (strain Nichols).